A 186-amino-acid polypeptide reads, in one-letter code: ATP synthase subunit delta (186 aa).

Belongs to the ATPase delta chain family. In terms of assembly, F-type ATPases have 2 components, F(1) - the catalytic core - and F(0) - the membrane proton channel. F(1) has five subunits: alpha(3), beta(3), gamma(1), delta(1), epsilon(1). CF(0) has four main subunits: a(1), b(1), b'(1) and c(10-14). The alpha and beta chains form an alternating ring which encloses part of the gamma chain. F(1) is attached to F(0) by a central stalk formed by the gamma and epsilon chains, while a peripheral stalk is formed by the delta, b and b' chains.

The protein resides in the cell inner membrane. F(1)F(0) ATP synthase produces ATP from ADP in the presence of a proton or sodium gradient. F-type ATPases consist of two structural domains, F(1) containing the extramembraneous catalytic core and F(0) containing the membrane proton channel, linked together by a central stalk and a peripheral stalk. During catalysis, ATP synthesis in the catalytic domain of F(1) is coupled via a rotary mechanism of the central stalk subunits to proton translocation. In terms of biological role, this protein is part of the stalk that links CF(0) to CF(1). It either transmits conformational changes from CF(0) to CF(1) or is implicated in proton conduction. This is ATP synthase subunit delta from Rhodopseudomonas palustris (strain BisA53).